The chain runs to 127 residues: Large ribosomal subunit protein bL17 (127 aa).

It belongs to the bacterial ribosomal protein bL17 family. As to quaternary structure, part of the 50S ribosomal subunit. Contacts protein L32.

The chain is Large ribosomal subunit protein bL17 from Stenotrophomonas maltophilia (strain K279a).